Reading from the N-terminus, the 333-residue chain is Ribokinase (333 aa).

Residues 10–12 (NYD), 38–42 (GKGLN), and Glu149 each bind substrate. ATP is bound by residues Asn193 and 248-253 (TLGSRG). Asp277 and Thr279 together coordinate K(+). 282-283 (GD) contacts ATP. Asp283 contributes to the substrate binding site. Residue Asp283 is the Proton acceptor of the active site. Positions 313, 316, 318, and 322 each coordinate K(+).

Belongs to the carbohydrate kinase PfkB family. Ribokinase subfamily. Homodimer. Requires Mg(2+) as cofactor.

Its subcellular location is the cytoplasm. It is found in the nucleus. The catalysed reaction is D-ribose + ATP = D-ribose 5-phosphate + ADP + H(+). Its pathway is carbohydrate metabolism; D-ribose degradation; D-ribose 5-phosphate from beta-D-ribopyranose: step 2/2. Its activity is regulated as follows. Activated by a monovalent cation that binds near, but not in, the active site. The most likely occupant of the site in vivo is potassium. Ion binding induces a conformational change that may alter substrate affinity. Its function is as follows. Catalyzes the phosphorylation of ribose at O-5 in a reaction requiring ATP and magnesium. The resulting D-ribose-5-phosphate can then be used either for sythesis of nucleotides, histidine, and tryptophan, or as a component of the pentose phosphate pathway. The chain is Ribokinase from Saccharomyces cerevisiae (strain ATCC 204508 / S288c) (Baker's yeast).